Reading from the N-terminus, the 282-residue chain is Bifunctional protein FolD 2 (282 aa).

NADP(+) contacts are provided by residues 164 to 166 (GRS) and serine 189.

It belongs to the tetrahydrofolate dehydrogenase/cyclohydrolase family. As to quaternary structure, homodimer.

It catalyses the reaction (6R)-5,10-methylene-5,6,7,8-tetrahydrofolate + NADP(+) = (6R)-5,10-methenyltetrahydrofolate + NADPH. The catalysed reaction is (6R)-5,10-methenyltetrahydrofolate + H2O = (6R)-10-formyltetrahydrofolate + H(+). It functions in the pathway one-carbon metabolism; tetrahydrofolate interconversion. Functionally, catalyzes the oxidation of 5,10-methylenetetrahydrofolate to 5,10-methenyltetrahydrofolate and then the hydrolysis of 5,10-methenyltetrahydrofolate to 10-formyltetrahydrofolate. This Lactobacillus johnsonii (strain CNCM I-12250 / La1 / NCC 533) protein is Bifunctional protein FolD 2.